The primary structure comprises 421 residues: Fumarylacetoacetase (421 aa).

D131 provides a ligand contact to Ca(2+). H138 serves as the catalytic Proton acceptor. R147 provides a ligand contact to substrate. 3 residues coordinate Ca(2+): E204, E206, and D238. Position 238 (D238) interacts with Mg(2+). Residues Q245 and Y249 each coordinate substrate. Residues K258 and T262 each contribute to the Mg(2+) site. A substrate-binding site is contributed by T355.

Belongs to the FAH family. It depends on Ca(2+) as a cofactor. The cofactor is Mg(2+).

The catalysed reaction is 4-fumarylacetoacetate + H2O = acetoacetate + fumarate + H(+). It participates in amino-acid degradation; L-phenylalanine degradation; acetoacetate and fumarate from L-phenylalanine: step 6/6. Converts fumarylacetoacetate to acetoacetate and fumarate. Involved in tyrosine catabolic pathway. Catalyzes the final step in the tyrosine degradation pathway. This is Fumarylacetoacetase from Arabidopsis thaliana (Mouse-ear cress).